The sequence spans 500 residues: Matrilin-1 (500 aa).

The N-terminal stretch at 1–29 is a signal peptide; the sequence is MKVTSGPAFALCSLLLLLLLLLQVPDSLS. The region spanning 30–226 is the VWFA 1 domain; the sequence is LVPQPRGHLC…AKKFQEAFCV (197 aa). The N-linked (GlcNAc...) asparagine glycan is linked to N80. The 41-residue stretch at 227 to 267 folds into the EGF-like domain; sequence VSDLCATGDHDCEQLCVSSPGSYTCACHEGFTLNSDGKTCN. Disulfide bonds link C231/C242, C238/C251, and C253/C266. In terms of domain architecture, VWFA 2 spans 268–457; that stretch reads VCRGGGSGSA…GKKLQKQICV (190 aa). The N-linked (GlcNAc...) asparagine glycan is linked to N348. Positions 471-499 form a coiled coil; sequence EAKVEGLLQALTRKLEAVSGRLAVLENRI.

As to quaternary structure, homotrimer. Part of a complex composed of MATN1 (via VWFA1 domain), type 2 collagens and type 6 collagens. Forms a complex (via covalent bonds) with ACAN; the interaction increases in abundance with increasing age of the organism via an increase in occupancy of MATN1 binding sites. Interacts with COMP. In terms of processing, N-glycosylated; reduces binding affinity for type 2 collagens. In terms of tissue distribution, expressed in femoral head articular cartilage. Expressed in the trachea and extraskeletal tissue around the eye.

The protein resides in the secreted. The protein localises to the extracellular space. Its subcellular location is the extracellular matrix. A major component of the extracellular matrix of non-articular cartilage. Binds to type 2 collagens and forms long concatenated protein networks as part of the extracellular matrix. Required for the network-like organization and bundling of collagen fibrils surrounding chondrocytes in the zones of maturation and hypertrophy. Required for mechanotransduction and adaption to mechanical loading in cartilage chondrocytes, resulting in an increase in expression of the extracellular matrix components ACAN and COL2A1. Acts as a moderator of angiogenesis in response to injury. In Mus musculus (Mouse), this protein is Matrilin-1.